The sequence spans 252 residues: Flagellar brake protein YcgR (252 aa).

The PilZ domain maps to 123–238; the sequence is QRREFYRVPT…TLATVQKYIT (116 aa).

It belongs to the YcgR family. Monomer. Interacts with the flagellar basal bodies.

The protein resides in the bacterial flagellum basal body. Functionally, acts as a flagellar brake, regulating swimming and swarming in a bis-(3'-5') cyclic diguanylic acid (c-di-GMP)-dependent manner. Binds 1 c-di-GMP dimer per subunit. Increasing levels of c-di-GMP lead to decreased motility. The chain is Flagellar brake protein YcgR from Janthinobacterium sp. (strain Marseille) (Minibacterium massiliensis).